The following is a 59-amino-acid chain: Potassium channel toxin alpha-KTx 4.1 (59 aa).

Positions 1-22 (MKAFYGILIIFILISMIDLSKQ) are cleaved as a signal peptide. 3 disulfide bridges follow: cysteine 29–cysteine 50, cysteine 35–cysteine 55, and cysteine 39–cysteine 57. The segment at 48–55 (GKCMNGKC) is interaction with Ca(2+)-activated K(+) channels.

The protein belongs to the short scorpion toxin superfamily. Potassium channel inhibitor family. Alpha-KTx 04 subfamily. Expressed by the venom gland.

It is found in the secreted. In terms of biological role, potently blocks Kv1.1/KCNA1 (85%), Kv1.2/KCNA2 (91%), Kv1.3/KCNA3 (89%), Kv1.6/KCNA6 (94%), and Shaker (97%). The chain is Potassium channel toxin alpha-KTx 4.1 from Tityus serrulatus (Brazilian scorpion).